A 413-amino-acid polypeptide reads, in one-letter code: Divalent metal cation transporter MntH (413 aa).

The Cytoplasmic portion of the chain corresponds to 1 to 19 (MTDNRVENSSGRAARKLRL). A helical membrane pass occupies residues 20-39 (ALMGPAFIAAIGYIDPGNFA). Over 40–51 (TNIQAGASFGYQ) the chain is Periplasmic. The helical transmembrane segment at 52-71 (LLWVVVWANLMAMLIQILSA) threads the bilayer. Over 72-95 (KLGIATGKNLAEQIRDHYPRPVVW) the chain is Cytoplasmic. A helical transmembrane segment spans residues 96 to 118 (FYWVQAEIIAMATDLAEFIGAAI). At 119–125 (GFKLILG) the chain is on the periplasmic side. The helical transmembrane segment at 126–145 (VSLLQGAVLTGIATFLILML) threads the bilayer. Residues 146–155 (QRRGQKPLEK) are Cytoplasmic-facing. Residues 156–175 (VIGGLLLFVAAAYIVELFFS) form a helical membrane-spanning segment. Topologically, residues 176–196 (QPDMAQLGKGMVIPALPNPEA) are periplasmic. A helical transmembrane segment spans residues 197 to 220 (VFLAAGVLGATIMPHVIYLHSSLT). Residues 221 to 238 (QHLHGGTRQQRYSATKWD) are Cytoplasmic-facing. The chain crosses the membrane as a helical span at residues 239-258 (VAIAMTIAGFVNLAMMATAA). Residues 259–276 (AAFHFSGHTGIADLDQAY) are Periplasmic-facing. The helical transmembrane segment at 277–297 (LTLEPLLSHAAATVFGLSLVA) threads the bilayer. Residues 298 to 327 (AGLSSTVVGTLAGQVVMQGFVRFHIPLWVR) are Cytoplasmic-facing. A helical membrane pass occupies residues 328–344 (RSITMLPSFIVILMGLD). Over 345–350 (PTRILV) the chain is Periplasmic. Residues 351–370 (MSQVLLSFGIALALVPLLIF) traverse the membrane as a helical segment. At 371–387 (TSNATLMGELVNTRRVK) the chain is on the cytoplasmic side. The chain crosses the membrane as a helical span at residues 388–406 (QIGWIIVVLVVALNIWLLV). Over 407 to 413 (GTVMGLS) the chain is Periplasmic.

The protein belongs to the NRAMP family.

It localises to the cell inner membrane. H(+)-stimulated, divalent metal cation uptake system. The sequence is that of Divalent metal cation transporter MntH from Salmonella gallinarum (strain 287/91 / NCTC 13346).